Reading from the N-terminus, the 256-residue chain is uncharacterized protein (256 aa).

An N-terminal signal peptide occupies residues 1–22 (MGYLKRIGMCISLLIVIIFVTS). A lipid anchor (N-palmitoyl cysteine) is attached at C23. C23 carries the S-diacylglycerol cysteine lipid modification.

Belongs to the staphylococcal tandem lipoprotein family.

It localises to the cell membrane. This is an uncharacterized protein from Staphylococcus aureus (strain MSSA476).